The primary structure comprises 1752 residues: Serine protease/ABC transporter B family protein tagA (1752 aa).

The N-terminal stretch at 1–24 (MNKKLFIFGLSLFLFLFIFNLSLS) is a signal peptide. N-linked (GlcNAc...) asparagine glycosylation occurs at N20. Residues 280 to 696 (HYSIQSGSAS…FGNIQLSKLI (417 aa)) form the Peptidase S8 domain. Catalysis depends on charge relay system residues D312 and H352. Residues N400 and N557 are each glycosylated (N-linked (GlcNAc...) asparagine). S625 functions as the Charge relay system in the catalytic mechanism. N-linked (GlcNAc...) asparagine glycans are attached at residues N653, N785, and N823. The helical transmembrane segment at 909–929 (IVLLGIFGIIIVGAVIFVLVC) threads the bilayer. A disordered region spans residues 946–1032 (DKGGDGNSIR…QNNSPQYDED (87 aa)). Residues 962–994 (NNNNNNNNNNNNNNNNNNNNNNNNNNNNNNNNN) show a composition bias toward low complexity. The N-linked (GlcNAc...) asparagine glycan is linked to N993. Positions 995–1004 (SNGKQSNIEL) are enriched in polar residues. Positions 1013–1028 (GTPNGDDQQQQNNSPQ) are enriched in low complexity. Transmembrane regions (helical) follow at residues 1058–1078 (ILGL…AVPL), 1102–1122 (FALI…LLAL), 1174–1194 (IPHM…LFII), 1200–1220 (LVVL…GGYI), 1285–1305 (TSGI…SSLV), and 1315–1335 (LIAF…VASL). One can recognise an ABC transmembrane type-1 domain in the interval 1059 to 1341 (LGLALFLSFI…VASLYTTYKS (283 aa)). An ABC transporter domain is found at 1374–1610 (IQFNKVSFAY…KGMFYDFVQI (237 aa)). 1409–1416 (GPSGGGKS) is an ATP binding site. The tract at residues 1621-1686 (IQLPSNSRNT…SRSPPPMWRQ (66 aa)) is disordered. Residues 1631-1642 (RNADKLRNRSET) are compositionally biased toward basic and acidic residues. Residues N1638, N1670, and N1694 are each glycosylated (N-linked (GlcNAc...) asparagine).

This sequence in the C-terminal section; belongs to the ABC transporter superfamily. ABCB family. Multidrug resistance exporter (TC 3.A.1.201) subfamily. The protein in the N-terminal section; belongs to the peptidase S8 family.

The protein resides in the membrane. In terms of biological role, required for a general cell fate determination at the onset of development. Required for the specification of an initial population of prespore cells in which tagA is expressed. Required for normal SDF-2 signaling during spore encapsulation. The sequence is that of Serine protease/ABC transporter B family protein tagA (tagA) from Dictyostelium discoideum (Social amoeba).